An 85-amino-acid polypeptide reads, in one-letter code: Conotoxin Lt28.7 (85 aa).

The N-terminal stretch at 1–21 (MPKLEMMLLVLLILPLCYIDA) is a signal peptide. A propeptide spanning residues 22 to 40 (VGPPPPWNMEDEIIEHWQE) is cleaved from the precursor.

It belongs to the conotoxin D superfamily. In terms of processing, contains 5 disulfide bonds. Expressed by the venom duct.

It localises to the secreted. Its function is as follows. Probable neurotoxin. The protein is Conotoxin Lt28.7 of Conus litteratus (Lettered cone).